The sequence spans 142 residues: MLGLHVGTLISLFLCILLEPVEGSLMQPCQPINQTVSLEKEGCPTCLVIQTPICSGHCVTKEPVFKSPFSTVYQHVCTYRDVRYETIRLPDCPPWVDPHVTYPVALSCDCSLCNMDTSDCTIESLQPDFCITQRVLTDGDMW.

Residues 1 to 23 (MLGLHVGTLISLFLCILLEPVEG) form the signal peptide. 6 disulfide bridges follow: C29/C77, C43/C92, C46/C130, C54/C108, C58/C110, and C113/C120. N33 is a glycosylation site (N-linked (GlcNAc...) asparagine).

Belongs to the glycoprotein hormones subunit beta family. Heterodimer of an alpha and a beta chain.

The protein resides in the secreted. Involved in gametogenesis and steroidogenesis. This Oncorhynchus keta (Chum salmon) protein is Gonadotropin subunit beta-2 (cgbb).